The following is a 152-amino-acid chain: Neuromedin-S (152 aa).

Positions 1 to 26 (MKHPFPQFPPILVIYCFCMLQIPSSG) are cleaved as a signal peptide. 3 consecutive propeptides follow at residues 27-69 (ASPP…VYKR), 70-105 (FLFH…PSRR), and 106-108 (MKR). Asn144 carries the asparagine amide modification. Residues 147–152 (YTDKVQ) constitute a propeptide that is removed on maturation.

This sequence belongs to the NmU family. As to expression, expressed in the CNS, spleen and testis. Specifically expressed in the suprachiasmatic nuclei (SCN) of the hypothalamus.

The protein localises to the secreted. Implicated in the regulation of circadian rhythms through autocrine and/or paracrine actions. Stimulates the contraction of rectum and elevation of blood pressure. In Rattus norvegicus (Rat), this protein is Neuromedin-S (Nms).